Here is a 272-residue protein sequence, read N- to C-terminus: 4-hydroxy-tetrahydrodipicolinate reductase (272 aa).

Residues 11-16 (GVSGRM) and Glu-37 contribute to the NAD(+) site. Arg-38 is a binding site for NADP(+). NAD(+)-binding positions include 101–103 (GTT) and 125–128 (AGNM). His-158 (proton donor/acceptor) is an active-site residue. Position 159 (His-159) interacts with (S)-2,3,4,5-tetrahydrodipicolinate. The active-site Proton donor is the Lys-162. 168–169 (GT) is a binding site for (S)-2,3,4,5-tetrahydrodipicolinate.

The protein belongs to the DapB family.

It is found in the cytoplasm. The enzyme catalyses (S)-2,3,4,5-tetrahydrodipicolinate + NAD(+) + H2O = (2S,4S)-4-hydroxy-2,3,4,5-tetrahydrodipicolinate + NADH + H(+). It carries out the reaction (S)-2,3,4,5-tetrahydrodipicolinate + NADP(+) + H2O = (2S,4S)-4-hydroxy-2,3,4,5-tetrahydrodipicolinate + NADPH + H(+). It participates in amino-acid biosynthesis; L-lysine biosynthesis via DAP pathway; (S)-tetrahydrodipicolinate from L-aspartate: step 4/4. Functionally, catalyzes the conversion of 4-hydroxy-tetrahydrodipicolinate (HTPA) to tetrahydrodipicolinate. This chain is 4-hydroxy-tetrahydrodipicolinate reductase, found in Roseobacter denitrificans (strain ATCC 33942 / OCh 114) (Erythrobacter sp. (strain OCh 114)).